Reading from the N-terminus, the 230-residue chain is Ribonuclease 3 (230 aa).

The region spanning 19–134 (ELLTIALTHR…LLGAIYLEHG (116 aa)) is the RNase III domain. Mg(2+) is bound at residue glutamate 44. Aspartate 48 is an active-site residue. Mg(2+) contacts are provided by aspartate 120 and glutamate 123. The DRBM domain occupies 161–229 (DWKSSLQELT…AASAYKTLDE (69 aa)).

Belongs to the ribonuclease III family. In terms of assembly, homodimer. The cofactor is Mg(2+).

The protein localises to the cytoplasm. It carries out the reaction Endonucleolytic cleavage to 5'-phosphomonoester.. In terms of biological role, digests double-stranded RNA. Involved in the processing of primary rRNA transcript to yield the immediate precursors to the all rRNAs (23S, 16S and 5S). Processes some mRNAs, and tRNAs when they are encoded in the rRNA operon. Processes pre-crRNA and tracrRNA of type II CRISPR loci if present in the organism. This Mycolicibacterium smegmatis (strain ATCC 700084 / mc(2)155) (Mycobacterium smegmatis) protein is Ribonuclease 3 (rnc).